Consider the following 330-residue polypeptide: Adenylate isopentenyltransferase 8, chloroplastic (330 aa).

Residues 1-35 (MQNLTSTFVSPSMIPITSPRLRLPPPRSVVPMTTV) constitute a chloroplast transit peptide. ATP is bound at residue 50–57 (GATGSGKS).

The protein belongs to the IPP transferase family. As to expression, expressed in roots and in immature seeds with highest expression in the chalazal endosperm.

It localises to the plastid. The protein resides in the chloroplast. It catalyses the reaction dimethylallyl diphosphate + ADP = N(6)-(dimethylallyl)adenosine 5'-diphosphate + diphosphate. The catalysed reaction is dimethylallyl diphosphate + ATP = N(6)-(dimethylallyl)adenosine 5'-triphosphate + diphosphate. Involved in cytokinin biosynthesis. Catalyzes the transfer of an isopentenyl group from dimethylallyl diphosphate (DMAPP) to ATP and ADP. This Arabidopsis thaliana (Mouse-ear cress) protein is Adenylate isopentenyltransferase 8, chloroplastic (IPT8).